The sequence spans 91 residues: Probable insulin-like peptide gamma-type 1 (91 aa).

Positions 1–26 (MSSYRQTLFILIILIVIILFVNEGQG) are cleaved as a signal peptide. Intrachain disulfides connect cysteine 37-cysteine 66, cysteine 49-cysteine 79, and cysteine 65-cysteine 70.

Belongs to the insulin family.

The protein resides in the secreted. This is Probable insulin-like peptide gamma-type 1 (ins-11) from Caenorhabditis elegans.